The primary structure comprises 77 residues: Putative membrane protein insertion efficiency factor (77 aa).

It belongs to the UPF0161 family.

It localises to the cell membrane. Could be involved in insertion of integral membrane proteins into the membrane. The sequence is that of Putative membrane protein insertion efficiency factor from Geobacillus sp. (strain WCH70).